The sequence spans 434 residues: Serine--tRNA ligase (434 aa).

L-serine is bound at residue 237–239 (TAE). Position 268–270 (268–270 (RAE)) interacts with ATP. Glu-291 lines the L-serine pocket. 358 to 361 (EISS) is an ATP binding site. Residue Ser-393 coordinates L-serine.

This sequence belongs to the class-II aminoacyl-tRNA synthetase family. Type-1 seryl-tRNA synthetase subfamily. In terms of assembly, homodimer. The tRNA molecule binds across the dimer.

It localises to the cytoplasm. The catalysed reaction is tRNA(Ser) + L-serine + ATP = L-seryl-tRNA(Ser) + AMP + diphosphate + H(+). It catalyses the reaction tRNA(Sec) + L-serine + ATP = L-seryl-tRNA(Sec) + AMP + diphosphate + H(+). It functions in the pathway aminoacyl-tRNA biosynthesis; selenocysteinyl-tRNA(Sec) biosynthesis; L-seryl-tRNA(Sec) from L-serine and tRNA(Sec): step 1/1. Catalyzes the attachment of serine to tRNA(Ser). Is also able to aminoacylate tRNA(Sec) with serine, to form the misacylated tRNA L-seryl-tRNA(Sec), which will be further converted into selenocysteinyl-tRNA(Sec). In Rhodopseudomonas palustris (strain ATCC BAA-98 / CGA009), this protein is Serine--tRNA ligase.